Here is a 965-residue protein sequence, read N- to C-terminus: Valine--tRNA ligase (965 aa).

A disordered region spans residues 1-22 (MENTPSHINKTEPSLDKTYSPQ). A 'HIGH' region motif is present at residues 56–66 (PNVTGSLHMGH). Positions 568-572 (KMSKS) match the 'KMSKS' region motif. K571 is an ATP binding site. The stretch at 896-965 (LIDKATELDR…IEQQATIAAL (70 aa)) forms a coiled coil.

Belongs to the class-I aminoacyl-tRNA synthetase family. ValS type 1 subfamily. In terms of assembly, monomer.

The protein resides in the cytoplasm. It carries out the reaction tRNA(Val) + L-valine + ATP = L-valyl-tRNA(Val) + AMP + diphosphate. Catalyzes the attachment of valine to tRNA(Val). As ValRS can inadvertently accommodate and process structurally similar amino acids such as threonine, to avoid such errors, it has a 'posttransfer' editing activity that hydrolyzes mischarged Thr-tRNA(Val) in a tRNA-dependent manner. In Yersinia pseudotuberculosis serotype I (strain IP32953), this protein is Valine--tRNA ligase.